Consider the following 299-residue polypeptide: Tetrahydromethanopterin S-methyltransferase subunit E (299 aa).

A run of 6 helical transmembrane segments spans residues 57–77 (AISG…TIAW), 80–100 (INAG…AAIV), 133–153 (IGPI…AAYL), 158–178 (LGNP…VGAI), 226–246 (YFCS…IIFL), and 262–282 (VTKT…AAVI).

Belongs to the MtrE family. As to quaternary structure, the complex is composed of 8 subunits; MtrA, MtrB, MtrC, MtrD, MtrE, MtrF, MtrG and MtrH.

The protein resides in the cell membrane. It carries out the reaction 5-methyl-5,6,7,8-tetrahydromethanopterin + coenzyme M + 2 Na(+)(in) = 5,6,7,8-tetrahydromethanopterin + methyl-coenzyme M + 2 Na(+)(out). The protein operates within one-carbon metabolism; methanogenesis from CO(2); methyl-coenzyme M from 5,10-methylene-5,6,7,8-tetrahydromethanopterin: step 2/2. Its function is as follows. Part of a complex that catalyzes the formation of methyl-coenzyme M and tetrahydromethanopterin from coenzyme M and methyl-tetrahydromethanopterin. This is an energy-conserving, sodium-ion translocating step. This is Tetrahydromethanopterin S-methyltransferase subunit E from Methanococcus maripaludis (strain C7 / ATCC BAA-1331).